Consider the following 94-residue polypeptide: Pyrimidine/purine nucleoside phosphorylase (94 aa).

The protein belongs to the nucleoside phosphorylase PpnP family.

It carries out the reaction a purine D-ribonucleoside + phosphate = a purine nucleobase + alpha-D-ribose 1-phosphate. The enzyme catalyses adenosine + phosphate = alpha-D-ribose 1-phosphate + adenine. The catalysed reaction is cytidine + phosphate = cytosine + alpha-D-ribose 1-phosphate. It catalyses the reaction guanosine + phosphate = alpha-D-ribose 1-phosphate + guanine. It carries out the reaction inosine + phosphate = alpha-D-ribose 1-phosphate + hypoxanthine. The enzyme catalyses thymidine + phosphate = 2-deoxy-alpha-D-ribose 1-phosphate + thymine. The catalysed reaction is uridine + phosphate = alpha-D-ribose 1-phosphate + uracil. It catalyses the reaction xanthosine + phosphate = alpha-D-ribose 1-phosphate + xanthine. Its function is as follows. Catalyzes the phosphorolysis of diverse nucleosides, yielding D-ribose 1-phosphate and the respective free bases. Can use uridine, adenosine, guanosine, cytidine, thymidine, inosine and xanthosine as substrates. Also catalyzes the reverse reactions. The polypeptide is Pyrimidine/purine nucleoside phosphorylase (Alcanivorax borkumensis (strain ATCC 700651 / DSM 11573 / NCIMB 13689 / SK2)).